Here is a 772-residue protein sequence, read N- to C-terminus: Subtilisin-like protease SBT5.3 (772 aa).

The signal sequence occupies residues 1-25; sequence MKLTHNFSFLLLLLLVHMSSKHILA. Positions 31–116 constitute an Inhibitor I9 domain; that stretch reads SYVVYFGAHS…VFPNKALKLH (86 aa). In terms of domain architecture, Peptidase S8 spans 120–628; that stretch reads SWDFLGLEHN…AGHVQPNLAV (509 aa). The active-site Charge relay system is D153. Residue N211 is glycosylated (N-linked (GlcNAc...) asparagine). The active-site Charge relay system is the H223. N-linked (GlcNAc...) asparagine glycosylation is found at N246, N306, and N396. A PA domain is found at 398 to 480; sequence SALDAQLCKL…KDSFAVSRYI (83 aa). S561 acts as the Charge relay system in catalysis. 5 N-linked (GlcNAc...) asparagine glycosylation sites follow: N606, N651, N662, N684, and N725.

This sequence belongs to the peptidase S8 family. In terms of tissue distribution, expressed specifically at sites of lateral root emergence.

The protein localises to the secreted. It localises to the cell wall. In terms of biological role, serine protease. Has a substrate preference for the hydrophobic residues Phe and Ala and the basic residue Asp in the P1 position, and for Asp, Leu or Ala in the P1' position. May play a role in the degradation of structural proteins in the extracellular matrix of cells located above sites of lateral root formation and thus facilitate lateral root emergence. The sequence is that of Subtilisin-like protease SBT5.3 (AIR3) from Arabidopsis thaliana (Mouse-ear cress).